A 160-amino-acid polypeptide reads, in one-letter code: Transcriptional repressor NrdR (160 aa).

Residues 3-34 (CPSCQNTDSRVLESRAADGGRSVRRRRECLNC) fold into a zinc finger. The region spanning 49 to 139 (ITVIKRNGNR…VYRQFRGIDD (91 aa)) is the ATP-cone domain.

Belongs to the NrdR family. Zn(2+) is required as a cofactor.

Functionally, negatively regulates transcription of bacterial ribonucleotide reductase nrd genes and operons by binding to NrdR-boxes. The protein is Transcriptional repressor NrdR of Synechococcus sp. (strain CC9605).